Here is a 207-residue protein sequence, read N- to C-terminus: Outer-membrane lipoprotein LolB (207 aa).

Residues 1–21 (MPLPDFRLIRLLPLAALVLTA) form the signal peptide. The N-palmitoyl cysteine moiety is linked to residue cysteine 22. A lipid anchor (S-diacylglycerol cysteine) is attached at cysteine 22.

This sequence belongs to the LolB family. Monomer.

It localises to the cell outer membrane. Plays a critical role in the incorporation of lipoproteins in the outer membrane after they are released by the LolA protein. The protein is Outer-membrane lipoprotein LolB of Escherichia coli (strain SMS-3-5 / SECEC).